The chain runs to 974 residues: UvrABC system protein A (974 aa).

Residue 34–41 (GLSGSGKS) coordinates ATP. 2 consecutive ABC transporter domains span residues 331–610 (WARS…TNSL) and 630–959 (ISKT…QFLK). 663-670 (GVSGGGKS) contributes to the ATP binding site. A C4-type zinc finger spans residues 762–788 (CEACQGDGVIKIEMHFLPDVYVTCDVC).

The protein belongs to the ABC transporter superfamily. UvrA family. In terms of assembly, forms a heterotetramer with UvrB during the search for lesions.

The protein localises to the cytoplasm. The UvrABC repair system catalyzes the recognition and processing of DNA lesions. UvrA is an ATPase and a DNA-binding protein. A damage recognition complex composed of 2 UvrA and 2 UvrB subunits scans DNA for abnormalities. When the presence of a lesion has been verified by UvrB, the UvrA molecules dissociate. The sequence is that of UvrABC system protein A from Brucella melitensis biotype 1 (strain ATCC 23456 / CCUG 17765 / NCTC 10094 / 16M).